A 424-amino-acid polypeptide reads, in one-letter code: Serine hydroxymethyltransferase 2 (424 aa).

(6S)-5,6,7,8-tetrahydrofolate-binding positions include Leu-125 and Gly-129–Leu-131. Position 234 is an N6-(pyridoxal phosphate)lysine (Lys-234). Glu-250 contacts (6S)-5,6,7,8-tetrahydrofolate.

It belongs to the SHMT family. As to quaternary structure, homodimer. The cofactor is pyridoxal 5'-phosphate.

The protein localises to the cytoplasm. It carries out the reaction (6R)-5,10-methylene-5,6,7,8-tetrahydrofolate + glycine + H2O = (6S)-5,6,7,8-tetrahydrofolate + L-serine. It functions in the pathway one-carbon metabolism; tetrahydrofolate interconversion. Its pathway is amino-acid biosynthesis; glycine biosynthesis; glycine from L-serine: step 1/1. Functionally, catalyzes the reversible interconversion of serine and glycine with tetrahydrofolate (THF) serving as the one-carbon carrier. This reaction serves as the major source of one-carbon groups required for the biosynthesis of purines, thymidylate, methionine, and other important biomolecules. Also exhibits THF-independent aldolase activity toward beta-hydroxyamino acids, producing glycine and aldehydes, via a retro-aldol mechanism. In Ralstonia nicotianae (strain ATCC BAA-1114 / GMI1000) (Ralstonia solanacearum), this protein is Serine hydroxymethyltransferase 2.